A 436-amino-acid chain; its full sequence is F-box/LRR-repeat protein 20 (436 aa).

Residues 22–68 (AVINKKLPKELLLRIFSFLDVVTLCRCAQVSRAWNVLALDGSNWQRI) enclose the F-box domain. 13 LRR repeats span residues 74 to 100 (QRDIEGRVVENISKRCGGFLRKLSLRG), 101 to 126 (CLGVGDNALRTFAQNCRNIEVLNLNG), 127 to 152 (CTKTTDATCTSLSKFCSKLRHLDLAS), 153 to 178 (CTSITNMSLKALSEGCPLLEQLNISW), 179 to 204 (CDQVTKDGIQALVRGCGGLKALFLKG), 205 to 230 (CTQLEDEALKYIGAHCPELVTLNLQT), 231 to 256 (CLQITDEGLITICRGCHKLQSLCASG), 257 to 282 (CSNITDAILNALGQNCPRLRILEVAR), 283 to 308 (CSQLTDVGFTTLARNCHELEKMDLEE), 309 to 334 (CVQITDSTLIQLSIHCPRLQVLSLSH), 335 to 363 (CELITDDGIRHLGNGACAHDQLEVIELDN), 364 to 388 (CPLITDASLEHLKSCHSLERIELYD), and 389 to 414 (CQQITRAGIKRLRTHLPNIKVHAYFA). At Thr417 the chain carries Phosphothreonine. Residue Ser421 is modified to Phosphoserine.

In terms of assembly, interacts with SKP1 and CUL1.

It localises to the cytoplasm. Its function is as follows. Substrate-recognition component of the SCF (SKP1-CUL1-F-box protein)-type E3 ubiquitin ligase complex. Role in neural transmission. The chain is F-box/LRR-repeat protein 20 (FBXL20) from Bos taurus (Bovine).